Consider the following 271-residue polypeptide: Phosphate import ATP-binding protein PstB 3 (271 aa).

Residues 20-266 (LRVEGLGFYY…PQETQTRDYV (247 aa)) form the ABC transporter domain. ATP is bound at residue 52–59 (GPSGCGKS).

This sequence belongs to the ABC transporter superfamily. Phosphate importer (TC 3.A.1.7) family. The complex is composed of two ATP-binding proteins (PstB), two transmembrane proteins (PstC and PstA) and a solute-binding protein (PstS).

It localises to the cell inner membrane. It catalyses the reaction phosphate(out) + ATP + H2O = ADP + 2 phosphate(in) + H(+). Functionally, part of the ABC transporter complex PstSACB involved in phosphate import. Responsible for energy coupling to the transport system. In Synechocystis sp. (strain ATCC 27184 / PCC 6803 / Kazusa), this protein is Phosphate import ATP-binding protein PstB 3.